The chain runs to 38 residues: Potassium channel toxin alpha-KTx 3.3 (38 aa).

Disulfide bonds link Cys-8/Cys-28, Cys-14/Cys-33, and Cys-18/Cys-35. The interaction with Ca(2+)-activated K(+) channels stretch occupies residues 26-33; that stretch reads GKCMNRKC.

Belongs to the short scorpion toxin superfamily. Potassium channel inhibitor family. Alpha-KTx 03 subfamily. In terms of tissue distribution, expressed by the venom gland.

The protein resides in the secreted. Potent inhibitor of shaker potassium channels as well as the mammalian homologs of shaker. This chain is Potassium channel toxin alpha-KTx 3.3, found in Leiurus hebraeus (Hebrew deathstalker scorpion).